Consider the following 318-residue polypeptide: Transaldolase (318 aa).

Residue Lys132 is the Schiff-base intermediate with substrate of the active site.

This sequence belongs to the transaldolase family. Type 1 subfamily. Homodimer.

Its subcellular location is the cytoplasm. It carries out the reaction D-sedoheptulose 7-phosphate + D-glyceraldehyde 3-phosphate = D-erythrose 4-phosphate + beta-D-fructose 6-phosphate. The protein operates within carbohydrate degradation; pentose phosphate pathway; D-glyceraldehyde 3-phosphate and beta-D-fructose 6-phosphate from D-ribose 5-phosphate and D-xylulose 5-phosphate (non-oxidative stage): step 2/3. Functionally, transaldolase is important for the balance of metabolites in the pentose-phosphate pathway. This is Transaldolase from Shewanella sp. (strain ANA-3).